The primary structure comprises 148 residues: Small ribosomal subunit protein eS19G (148 aa).

Belongs to the eukaryotic ribosomal protein eS19 family.

Functionally, elimination of the ALEP-1 gene from all somatic cells in its fully activate state may represent an alternative way to gene regulation. The chain is Small ribosomal subunit protein eS19G (RPS19G) from Ascaris suum (Pig roundworm).